A 424-amino-acid chain; its full sequence is Phosphomethylpyrimidine synthase (424 aa).

Substrate contacts are provided by residues Asn66, Met95, Tyr124, His163, 185 to 187 (SRG), 226 to 229 (DGMR), and Glu265. Residue His269 participates in Zn(2+) binding. Phe292 is a substrate binding site. His333 is a binding site for Zn(2+). Residues Cys408, Cys411, and Cys415 each contribute to the [4Fe-4S] cluster site.

This sequence belongs to the ThiC family. [4Fe-4S] cluster is required as a cofactor.

It carries out the reaction 5-amino-1-(5-phospho-beta-D-ribosyl)imidazole + S-adenosyl-L-methionine = 4-amino-2-methyl-5-(phosphooxymethyl)pyrimidine + CO + 5'-deoxyadenosine + formate + L-methionine + 3 H(+). It functions in the pathway cofactor biosynthesis; thiamine diphosphate biosynthesis. Its function is as follows. Catalyzes the synthesis of the hydroxymethylpyrimidine phosphate (HMP-P) moiety of thiamine from aminoimidazole ribotide (AIR) in a radical S-adenosyl-L-methionine (SAM)-dependent reaction. The sequence is that of Phosphomethylpyrimidine synthase from Thermotoga neapolitana (strain ATCC 49049 / DSM 4359 / NBRC 107923 / NS-E).